The sequence spans 555 residues: Embryonic protein DC-8 (555 aa).

Basic and acidic residues predominate over residues 83 to 115 (RENTDYAYDKGREGGDVAAQKAEEAKEKAKMAK). 2 disordered regions span residues 83 to 118 (RENT…KDTT) and 132 to 151 (KAEE…KEKA). 17 tandem repeats follow at residues 97 to 114 (GDVA…AKMA), 115 to 125 (KDTTMGKAGEY), 126 to 140 (KDYT…KEKA), 141 to 154 (AQKA…AGEY), 155 to 176 (KNYT…AGEY), 177 to 191 (KDYA…KDTT), 192 to 205 (AQKA…TGEY), 206 to 216 (KDYAAQKAAEA), 217 to 237 (KVLA…DGEY), 238 to 259 (KDYA…TGEY), 260 to 281 (KDYA…AKEY), 282 to 303 (KEYA…TGEY), 304 to 325 (KDYS…TKEY), 326 to 343 (KDYT…TMEK), 344 to 358 (AKEA…TGEY), 359 to 376 (KDYA…TVEK), and 377 to 391 (AKEG…MTEL). The segment at 97–391 (GDVAAQKAEE…DTTVGKMTEL (295 aa)) is 17 X approximate tandem repeats. The tract at residues 184-204 (AAEAKDTTAQKAAEAKEKTGE) is disordered. Positions 444–465 (LQEEGVKDEAKQRAEADRETAG) are enriched in basic and acidic residues. Residues 444 to 472 (LQEEGVKDEAKQRAEADRETAGDRGSAAK) are disordered.

Belongs to the LEA type 4 family.

The protein resides in the cytoplasm. Its subcellular location is the secreted. The protein localises to the cell wall. May play a role in late embryogeny. The chain is Embryonic protein DC-8 from Daucus carota (Wild carrot).